Consider the following 347-residue polypeptide: Lipoyl synthase (347 aa).

Cys-55, Cys-60, Cys-66, Cys-81, Cys-85, Cys-88, and Ser-292 together coordinate [4Fe-4S] cluster. A Radical SAM core domain is found at 67–281; it reads WEDREASFLI…SEAAYDMGFP (215 aa).

This sequence belongs to the radical SAM superfamily. Lipoyl synthase family. [4Fe-4S] cluster serves as cofactor.

It is found in the cytoplasm. It carries out the reaction [[Fe-S] cluster scaffold protein carrying a second [4Fe-4S](2+) cluster] + N(6)-octanoyl-L-lysyl-[protein] + 2 oxidized [2Fe-2S]-[ferredoxin] + 2 S-adenosyl-L-methionine + 4 H(+) = [[Fe-S] cluster scaffold protein] + N(6)-[(R)-dihydrolipoyl]-L-lysyl-[protein] + 4 Fe(3+) + 2 hydrogen sulfide + 2 5'-deoxyadenosine + 2 L-methionine + 2 reduced [2Fe-2S]-[ferredoxin]. It functions in the pathway protein modification; protein lipoylation via endogenous pathway; protein N(6)-(lipoyl)lysine from octanoyl-[acyl-carrier-protein]: step 2/2. In terms of biological role, catalyzes the radical-mediated insertion of two sulfur atoms into the C-6 and C-8 positions of the octanoyl moiety bound to the lipoyl domains of lipoate-dependent enzymes, thereby converting the octanoylated domains into lipoylated derivatives. This Corynebacterium urealyticum (strain ATCC 43042 / DSM 7109) protein is Lipoyl synthase.